An 800-amino-acid polypeptide reads, in one-letter code: Nucleolar complex protein 3 homolog (800 aa).

2 stretches are compositionally biased toward basic residues: residues 1–19 (MGPA…RKLL) and 42–53 (KKQRKEQRKLHK). Disordered regions lie at residues 1–91 (MGPA…TDMM) and 167–197 (KPVL…SAPL). Positions 65 to 74 (PLERYKKRPE) are enriched in basic and acidic residues. Residues 449-490 (SFKEKRKNLSRMQRKWKKAEEKLQKELLEAEATESKEKKIKL) adopt a coiled-coil conformation. The tract at residues 780 to 800 (LQEEPEQMSLDFTSPHTQQEP) is disordered. A compositionally biased stretch (polar residues) spans 789–800 (LDFTSPHTQQEP).

This sequence belongs to the CBF/MAK21 family.

The protein resides in the nucleus. Its subcellular location is the nucleolus. This chain is Nucleolar complex protein 3 homolog (noc3l), found in Danio rerio (Zebrafish).